The primary structure comprises 198 residues: Holliday junction branch migration complex subunit RuvA (198 aa).

The interval 1–63 is domain I; the sequence is MYDYIKGQLT…EDAQLLFGFH (63 aa). The segment at 64-142 is domain II; it reads SEEEKDVFLK…EAPKEESSKP (79 aa). The segment at 143 to 147 is flexible linker; it reads PKAKQ. Positions 148–198 are domain III; it reads QGNEQLDEAVEALLALGYKATELKKIRAFFEGTSETAEQYIKSALKMLMKG.

It belongs to the RuvA family. As to quaternary structure, homotetramer. Forms an RuvA(8)-RuvB(12)-Holliday junction (HJ) complex. HJ DNA is sandwiched between 2 RuvA tetramers; dsDNA enters through RuvA and exits via RuvB. An RuvB hexamer assembles on each DNA strand where it exits the tetramer. Each RuvB hexamer is contacted by two RuvA subunits (via domain III) on 2 adjacent RuvB subunits; this complex drives branch migration. In the full resolvosome a probable DNA-RuvA(4)-RuvB(12)-RuvC(2) complex forms which resolves the HJ.

The protein resides in the cytoplasm. Its function is as follows. The RuvA-RuvB-RuvC complex processes Holliday junction (HJ) DNA during genetic recombination and DNA repair, while the RuvA-RuvB complex plays an important role in the rescue of blocked DNA replication forks via replication fork reversal (RFR). RuvA specifically binds to HJ cruciform DNA, conferring on it an open structure. The RuvB hexamer acts as an ATP-dependent pump, pulling dsDNA into and through the RuvAB complex. HJ branch migration allows RuvC to scan DNA until it finds its consensus sequence, where it cleaves and resolves the cruciform DNA. This Streptococcus equi subsp. zooepidemicus (strain H70) protein is Holliday junction branch migration complex subunit RuvA.